The chain runs to 313 residues: Porphobilinogen deaminase (313 aa).

The residue at position 240 (cysteine 240) is an S-(dipyrrolylmethanemethyl)cysteine.

It belongs to the HMBS family. Monomer. Dipyrromethane serves as cofactor.

It catalyses the reaction 4 porphobilinogen + H2O = hydroxymethylbilane + 4 NH4(+). It participates in porphyrin-containing compound metabolism; protoporphyrin-IX biosynthesis; coproporphyrinogen-III from 5-aminolevulinate: step 2/4. In terms of biological role, tetrapolymerization of the monopyrrole PBG into the hydroxymethylbilane pre-uroporphyrinogen in several discrete steps. This Moorella thermoacetica (strain ATCC 39073 / JCM 9320) protein is Porphobilinogen deaminase.